Here is a 126-residue protein sequence, read N- to C-terminus: Large-conductance mechanosensitive channel (126 aa).

Transmembrane regions (helical) follow at residues 14–34 and 66–86; these read VIDL…VNSL and FITT…LVVV.

It belongs to the MscL family. In terms of assembly, homopentamer.

It is found in the cell membrane. Channel that opens in response to stretch forces in the membrane lipid bilayer. May participate in the regulation of osmotic pressure changes within the cell. This chain is Large-conductance mechanosensitive channel, found in Roseiflexus sp. (strain RS-1).